A 406-amino-acid chain; its full sequence is Homocysteine-responsive endoplasmic reticulum-resident ubiquitin-like domain member 2 protein (406 aa).

The 80-residue stretch at 10-89 folds into the Ubiquitin-like domain; it reads VTLIIKAPNQ…HMVHLVCTSR (80 aa). The disordered stretch occupies residues 86–156; that stretch reads CTSRTPPSSP…PQAQTDPAQS (71 aa). 2 stretches are compositionally biased toward low complexity: residues 87–98 and 109–139; these read TSRTPPSSPKSS and SNSNSSSDQSGSSTPSSSQETLTLATSSSSE. A compositionally biased stretch (polar residues) spans 145–156; the sequence is TLPQAQTDPAQS. The chain crosses the membrane as a helical span at residues 302–322; that stretch reads FIMVMGAMLLVYLHQAGWFPF.

It is found in the membrane. In terms of biological role, could be involved in the unfolded protein response (UPR) pathway. The chain is Homocysteine-responsive endoplasmic reticulum-resident ubiquitin-like domain member 2 protein (HERPUD2) from Bos taurus (Bovine).